Here is a 565-residue protein sequence, read N- to C-terminus: Thiol:disulfide interchange protein DsbD (565 aa).

Positions 1-19 (MAQRIFTLILLLCSTSVFA) are cleaved as a signal peptide. 2 disulfide bridges follow: C122/C128 and C182/C304. A run of 7 helical transmembrane segments spans residues 163–183 (LPFS…TPCV), 208–228 (LLTF…GLVV), 243–263 (YVLI…FGLF), 296–316 (IAGL…LLYI), 323–343 (WLGG…LMLI), 357–377 (WMEQ…VFLL), and 384–404 (VWGL…AFIT). In terms of domain architecture, Thioredoxin spans 434–565 (WAFGATHTAQ…FSAHLRDRQP (132 aa)). C480 and C483 are joined by a disulfide.

The protein belongs to the thioredoxin family. DsbD subfamily.

It localises to the cell inner membrane. The catalysed reaction is [protein]-dithiol + NAD(+) = [protein]-disulfide + NADH + H(+). It carries out the reaction [protein]-dithiol + NADP(+) = [protein]-disulfide + NADPH + H(+). Its function is as follows. Required to facilitate the formation of correct disulfide bonds in some periplasmic proteins and for the assembly of the periplasmic c-type cytochromes. Acts by transferring electrons from cytoplasmic thioredoxin to the periplasm. This transfer involves a cascade of disulfide bond formation and reduction steps. In Shigella flexneri serotype 5b (strain 8401), this protein is Thiol:disulfide interchange protein DsbD.